The following is a 298-amino-acid chain: GTPase Era (298 aa).

In terms of domain architecture, Era-type G spans 4–171; it reads RAGFVALIGR…KEKIVSFLPE (168 aa). The G1 stretch occupies residues 12–19; sequence GRTNVGKS. Position 12–19 (12–19) interacts with GTP; sequence GRTNVGKS. The interval 38–42 is G2; it reads QTTRN. The segment at 59–62 is G3; that stretch reads DTPG. Residues 59 to 63 and 121 to 124 contribute to the GTP site; these read DTPGI and NKID. The G4 stretch occupies residues 121–124; the sequence is NKID. The tract at residues 150 to 152 is G5; the sequence is ISA. The region spanning 202-280 is the KH type-2 domain; sequence LEEEVPHGVY…FLQLWVKVRK (79 aa).

The protein belongs to the TRAFAC class TrmE-Era-EngA-EngB-Septin-like GTPase superfamily. Era GTPase family. As to quaternary structure, monomer.

The protein localises to the cytoplasm. The protein resides in the cell membrane. In terms of biological role, an essential GTPase that binds both GDP and GTP, with rapid nucleotide exchange. Plays a role in 16S rRNA processing and 30S ribosomal subunit biogenesis and possibly also in cell cycle regulation and energy metabolism. The sequence is that of GTPase Era from Caldanaerobacter subterraneus subsp. tengcongensis (strain DSM 15242 / JCM 11007 / NBRC 100824 / MB4) (Thermoanaerobacter tengcongensis).